A 295-amino-acid polypeptide reads, in one-letter code: Ribosomal protein L11 methyltransferase (295 aa).

S-adenosyl-L-methionine contacts are provided by Thr-145, Gly-166, Asp-188, and Asn-230.

Belongs to the methyltransferase superfamily. PrmA family.

Its subcellular location is the cytoplasm. The catalysed reaction is L-lysyl-[protein] + 3 S-adenosyl-L-methionine = N(6),N(6),N(6)-trimethyl-L-lysyl-[protein] + 3 S-adenosyl-L-homocysteine + 3 H(+). Methylates ribosomal protein L11. This chain is Ribosomal protein L11 methyltransferase, found in Shewanella amazonensis (strain ATCC BAA-1098 / SB2B).